A 231-amino-acid polypeptide reads, in one-letter code: Protein usf (231 aa).

The chain is Protein usf (usf) from Aquifex pyrophilus.